A 465-amino-acid polypeptide reads, in one-letter code: Sodium-dependent phosphate transport protein 1 (465 aa).

Asn39, Asn47, and Asn56 each carry an N-linked (GlcNAc...) asparagine glycan. The next 10 helical transmembrane spans lie at 79 to 99 (GLVL…VGYL), 117 to 137 (SVLS…VIVC), 176 to 196 (FVMG…LLGW), 199 to 219 (VFYI…ILLF), 260 to 280 (LPLW…NLLV), 299 to 319 (GLLS…AGQM), 337 to 357 (LFTT…LYLS), 363 to 383 (TVIF…GQLI), 399 to 419 (VTAL…GLIL), and 431 to 451 (FFLM…FAKG).

It belongs to the major facilitator superfamily. Sodium/anion cotransporter family. Interacts with PDZK1.

It is found in the apical cell membrane. It catalyses the reaction 3 Na(+)(out) + phosphate(out) = 3 Na(+)(in) + phosphate(in). It carries out the reaction urate(out) = urate(in). Its function is as follows. Important for the resorption of phosphate by the kidney. May be involved in actively transporting phosphate into cells via Na(+) cotransport in the renal brush border membrane. Plays a role in urate transport in the kidney. The polypeptide is Sodium-dependent phosphate transport protein 1 (Slc17a1) (Rattus norvegicus (Rat)).